The following is a 640-amino-acid chain: Replication protein A 70 kDa DNA-binding subunit A (640 aa).

The OB DNA-binding region spans 211 to 293 (AIKARVTAKG…NHLKNEWEIF (83 aa)). The C4-type zinc finger occupies 503–529 (CPLMIGDKQCNKKVTRSGTNRWLCDRC).

The protein belongs to the replication factor A protein 1 family. Heterotrimer of RPA1, RPA2 and RPA3 (canonical replication protein A complex). Interacts with RPA2A. In terms of tissue distribution, expressed in roots, leaves, stalks and flower buds.

The protein localises to the nucleus. Its function is as follows. Component of the replication protein A complex (RPA) required for DNA recombination, repair and replication. The activity of RPA is mediated by single-stranded DNA binding and protein interactions. Plays an essential role at later stages of meiotic recombination events required for the formation of class I crossovers. Is essential for normal progression through meiosis in pollen mother cells. Is involved in repair of double-strand DNA breaks (DSBs) induced by genotoxic stresses, but does not seem to be required for the repair of meiotic DSBs. In Arabidopsis thaliana (Mouse-ear cress), this protein is Replication protein A 70 kDa DNA-binding subunit A (RPA1A).